Consider the following 183-residue polypeptide: Lipid droplet coating protein mpl1 (183 aa).

The protein belongs to the perilipin family.

The protein resides in the lipid droplet. In terms of biological role, lipid droplet coating protein that regulates lipid metabolism, appressorial turgor pressure, and virulence. Appressorial turgor pressure is important for breaching the insect cuticle during infection. The polypeptide is Lipid droplet coating protein mpl1 (Metarhizium robertsii (strain ARSEF 23 / ATCC MYA-3075) (Metarhizium anisopliae (strain ARSEF 23))).